A 450-amino-acid polypeptide reads, in one-letter code: Putative gustatory receptor 28a (450 aa).

The Cytoplasmic portion of the chain corresponds to 1-47; sequence MAFKLWERFSQADNVFQALRPLTFISLLGLAPFRLNLNPRKEVQTSK. Residues 48-68 form a helical membrane-spanning segment; it reads FSFFAGIVHFLFFVLCFGISV. Residues 69-87 are Extracellular-facing; that stretch reads KEGDSIIGYFFQTNITRFS. Asn82 carries N-linked (GlcNAc...) asparagine glycosylation. Residues 88–108 traverse the membrane as a helical segment; sequence DGTLRLTGILAMSTIFGFAMF. At 109–138 the chain is on the cytoplasmic side; sequence KRQRLVSIIQNNIVVDEIFVRLGMKLDYRR. The chain crosses the membrane as a helical span at residues 139-159; sequence ILLSSFLISLGMLLFNVIYLC. The Extracellular portion of the chain corresponds to 160 to 171; that stretch reads VSYSLLVSATIS. Residues 172 to 192 traverse the membrane as a helical segment; sequence PSFVTFTTFALPHINISLMVF. Residues 193–292 lie on the Cytoplasmic side of the membrane; that stretch reads KFLCTTDLAR…CQTIEEYFTY (100 aa). The helical transmembrane segment at 293–313 threads the bilayer; sequence PLLGIIAISFLFILFDDFYIL. Residues 314 to 329 are Extracellular-facing; it reads EAILNPKRLDVFEADE. A helical membrane pass occupies residues 330-350; the sequence is FFAFFLMQLIWYIVIIVLIVE. The Cytoplasmic segment spans residues 351–407; that stretch reads GSSRTILHSSYTAAIVHKILNITDDPELRDRLFRLSLQLSHRKVLFTAAGLFRLDRT. The chain crosses the membrane as a helical span at residues 408-424; it reads LIFTITGAATCYLIILI. Residues 425-450 lie on the Extracellular side of the membrane; that stretch reads QFRFTHHMDDTSSNSTNNLHSIHLGD. Residue Asn438 is glycosylated (N-linked (GlcNAc...) asparagine).

It belongs to the insect chemoreceptor superfamily. Gustatory receptor (GR) family. Gr2a subfamily. As to expression, in addition to expression in a large number of taste neurons, Gr28a is also expressed in a few nonchemosensory neurons, including the campaniform sensilla of the wing, leg stretch receptors, and multiple dendritic (MD) neurons in the abdomen. In larvea, is expressed in neurons of the terminal external chemosensory organ, the dorsal external chemosensory organ, as well as in the ventral and posterior pharyngeal sense organ.

It localises to the cell membrane. In terms of biological role, probable gustatory receptor which mediates acceptance or avoidance behavior, depending on its substrates. Atypical expression also suggests nongustatory roles in the nervous system and tissues involved in proprioception, hygroreception, and other sensory modalities. It is also possible that it has chemosensory roles in the detection of internal ligands. This Drosophila melanogaster (Fruit fly) protein is Putative gustatory receptor 28a (Gr28a).